A 240-amino-acid chain; its full sequence is Coat protein (240 aa).

A compositionally biased stretch (polar residues) spans M1–D10. A disordered region spans residues M1–L27.

It belongs to the potexvirus capsid protein family.

It localises to the virion. Its function is as follows. Required for genome encapsidation. Forms ribonucleoprotein complexes along with TGB1 helicase and viral RNA. The chain is Coat protein from Narcissus pseudonarcissus (Daffodil).